The sequence spans 487 residues: Serine carboxypeptidase-like 37 (487 aa).

An N-terminal signal peptide occupies residues 1-28 (MVKQQDWSVTTCVLLFLFLASQIHCRSG). The N-linked (GlcNAc...) asparagine glycan is linked to N105. 3 cysteine pairs are disulfide-bonded: C120–C368, C280–C291, and C315–C336. S215 is a catalytic residue. 3 N-linked (GlcNAc...) asparagine glycosylation sites follow: N317, N357, and N375. D407 is a catalytic residue. N-linked (GlcNAc...) asparagine glycosylation is found at N423 and N449. Residue H460 is part of the active site.

This sequence belongs to the peptidase S10 family. Expressed in seedlings, roots, leaves, stems, flowers and siliques.

The protein localises to the secreted. Its function is as follows. Probable carboxypeptidase. The chain is Serine carboxypeptidase-like 37 (SCPL37) from Arabidopsis thaliana (Mouse-ear cress).